Consider the following 53-residue polypeptide: Photoreceptor disk component PRCD (53 aa).

Cys2 carries the S-palmitoyl cysteine lipid modification. The tract at residues 24–53 is disordered; the sequence is PEPSRVDGTVVGSGSDTDLQSTGREKGPVK. Positions 35-45 are enriched in polar residues; the sequence is GSGSDTDLQST.

It belongs to the PRCD family. In terms of assembly, interacts with RHO/rhodopsin; the interaction promotes PRCD stability. Post-translationally, palmitoylated at Cys-2. Palmitoylation is essential for protein stability and trafficking to the photoreceptor outer segment, but does not appear to be essential for membrane localization. Probably palmitoylated by ZDHHC3. Phosphorylated. In terms of tissue distribution, expressed in retina, where it localizes to both rod and cone photoreceptors (at protein level).

The protein resides in the cell projection. It is found in the cilium. Its subcellular location is the photoreceptor outer segment. It localises to the membrane. The protein localises to the endoplasmic reticulum. The protein resides in the golgi apparatus. Its function is as follows. Involved in vision. The protein is Photoreceptor disk component PRCD of Mus musculus (Mouse).